We begin with the raw amino-acid sequence, 283 residues long: uncharacterized protein (283 aa).

The next 3 membrane-spanning stretches (helical) occupy residues 24–44 (LFGY…GMFI), 64–84 (TIAG…TLIA), and 96–116 (VIAI…GSLS).

This sequence belongs to the MscS (TC 1.A.23) family.

The protein resides in the cell membrane. This is an uncharacterized protein from Buchnera aphidicola subsp. Schizaphis graminum (strain Sg).